The sequence spans 498 residues: Glycerol kinase (498 aa).

ADP is bound at residue Thr-12. Thr-12, Thr-13, and Ser-14 together coordinate ATP. Thr-12 serves as a coordination point for sn-glycerol 3-phosphate. Arg-16 provides a ligand contact to ADP. Sn-glycerol 3-phosphate-binding residues include Arg-82, Glu-83, and Tyr-134. Glycerol contacts are provided by Arg-82, Glu-83, and Tyr-134. Residue His-230 is modified to Phosphohistidine; by HPr. Asp-244 serves as a coordination point for sn-glycerol 3-phosphate. Asp-244 and Gln-245 together coordinate glycerol. Residues Thr-266 and Gly-309 each contribute to the ADP site. 4 residues coordinate ATP: Thr-266, Gly-309, Gln-313, and Gly-410. ADP contacts are provided by Gly-410 and Asn-414.

It belongs to the FGGY kinase family. Homotetramer and homodimer (in equilibrium). In terms of processing, the phosphoenolpyruvate-dependent sugar phosphotransferase system (PTS), including enzyme I, and histidine-containing protein (HPr) are required for the phosphorylation, which leads to the activation of the enzyme.

The enzyme catalyses glycerol + ATP = sn-glycerol 3-phosphate + ADP + H(+). It participates in polyol metabolism; glycerol degradation via glycerol kinase pathway; sn-glycerol 3-phosphate from glycerol: step 1/1. Its activity is regulated as follows. Activated by phosphorylation and inhibited by fructose 1,6-bisphosphate (FBP). In terms of biological role, key enzyme in the regulation of glycerol uptake and metabolism. Catalyzes the phosphorylation of glycerol to yield sn-glycerol 3-phosphate. This chain is Glycerol kinase, found in Staphylococcus aureus (strain bovine RF122 / ET3-1).